Consider the following 512-residue polypeptide: Dihydroniloticin synthase CYP71CD2 (512 aa).

A helical membrane pass occupies residues Met1 to Phe21. Position 449 (Cys449) interacts with heme.

It belongs to the cytochrome P450 family. It depends on heme as a cofactor.

It localises to the membrane. It catalyses the reaction tirucalla-7,24-dien-3beta-ol + 2 reduced [NADPH--hemoprotein reductase] + 2 O2 = dihydroniloticin + 2 oxidized [NADPH--hemoprotein reductase] + 2 H2O + 2 H(+). The protein operates within secondary metabolite biosynthesis; terpenoid biosynthesis. Its function is as follows. Monooxygenase involved in the biosynthesis of limonoids triterpene natural products such as azadirachtin, an antifeedant widely used as bioinsecticide, and possessing many medicinal applications including anti-tumoral, anti-malarial, anti-rheumatic, antibacterial, anti-inflammatory, anti-pyretic and diuretic effects. Catalyzes the conversion of tirucalladienol to dihydroniloticin. This chain is Dihydroniloticin synthase CYP71CD2, found in Azadirachta indica (Neem tree).